Here is a 257-residue protein sequence, read N- to C-terminus: Synaptosomal-associated protein 29 (257 aa).

The interval 1-42 (MSGYPKSYNPFDDDVEDEDTRPAPWKDARDLPDGPDPPIDRQ) is disordered. Residues 20–32 (TRPAPWKDARDLP) are compositionally biased toward basic and acidic residues. Phosphoserine occurs at positions 77, 78, 114, 163, 181, 203, and 209. A t-SNARE coiled-coil homology domain is found at 195–257 (RAYHQKIDSN…KSTEKKVRQL (63 aa)).

Belongs to the SNAP-25 family. Forms a SNARE complex, composed of VAMP8, SNAP29 and STX17, involved in fusion of autophagosome with lysosome. Interacts with multiple syntaxins including STX6. Interacts with EIPR1. Interacts with STX17; this interaction is increased in the absence of TMEM39A. In terms of tissue distribution, widely expressed.

The protein resides in the cytoplasm. The protein localises to the golgi apparatus membrane. It localises to the cytoplasmic vesicle. Its subcellular location is the autophagosome membrane. It is found in the cell projection. The protein resides in the cilium membrane. Its function is as follows. SNAREs, soluble N-ethylmaleimide-sensitive factor-attachment protein receptors, are essential proteins for fusion of cellular membranes. SNAREs localized on opposing membranes assemble to form a trans-SNARE complex, an extended, parallel four alpha-helical bundle that drives membrane fusion. SNAP29 is a SNARE involved in autophagy through the direct control of autophagosome membrane fusion with the lysososome membrane. Also plays a role in ciliogenesis by regulating membrane fusions. This is Synaptosomal-associated protein 29 from Rattus norvegicus (Rat).